A 170-amino-acid polypeptide reads, in one-letter code: Adenine phosphoribosyltransferase (170 aa).

It belongs to the purine/pyrimidine phosphoribosyltransferase family. As to quaternary structure, homodimer.

It localises to the cytoplasm. It catalyses the reaction AMP + diphosphate = 5-phospho-alpha-D-ribose 1-diphosphate + adenine. The protein operates within purine metabolism; AMP biosynthesis via salvage pathway; AMP from adenine: step 1/1. Its function is as follows. Catalyzes a salvage reaction resulting in the formation of AMP, that is energically less costly than de novo synthesis. The protein is Adenine phosphoribosyltransferase of Oceanobacillus iheyensis (strain DSM 14371 / CIP 107618 / JCM 11309 / KCTC 3954 / HTE831).